A 225-amino-acid polypeptide reads, in one-letter code: Small ribosomal subunit protein uS2 (225 aa).

The segment covering Met-1–Ala-14 has biased composition (basic and acidic residues). The disordered stretch occupies residues Met-1–Gly-33.

This sequence belongs to the universal ribosomal protein uS2 family.

This chain is Small ribosomal subunit protein uS2, found in Methanosarcina barkeri (strain Fusaro / DSM 804).